We begin with the raw amino-acid sequence, 110 residues long: Large ribosomal subunit protein uL22 (110 aa).

It belongs to the universal ribosomal protein uL22 family. Part of the 50S ribosomal subunit.

This protein binds specifically to 23S rRNA; its binding is stimulated by other ribosomal proteins, e.g. L4, L17, and L20. It is important during the early stages of 50S assembly. It makes multiple contacts with different domains of the 23S rRNA in the assembled 50S subunit and ribosome. Its function is as follows. The globular domain of the protein is located near the polypeptide exit tunnel on the outside of the subunit, while an extended beta-hairpin is found that lines the wall of the exit tunnel in the center of the 70S ribosome. The polypeptide is Large ribosomal subunit protein uL22 (Baumannia cicadellinicola subsp. Homalodisca coagulata).